The chain runs to 28 residues: 3,4-dihydroxybenzoate decarboxylase (28 aa).

As to quaternary structure, homopentamer.

The catalysed reaction is 3,4-dihydroxybenzoate + H(+) = catechol + CO2. Inhibited by oxygen. Completely inhibited by HgCl(2). Partially inhibited by ZnSO(4), 2,3,4-trihydroxybeonzoate and 3,4,5-trihydroxybeonzoate. Unaffected by KCl, MnCl(2) or EDTA. Not stimulated by thiamine phosphate, pyridoxal 5'-phosphate or biotin. Not inhibited by hydroxylamine, NaBH(4) or avidin. Functionally, reversibly catalyzes the decarboxylation of 3,4-dihydroxybenzoate to catechol. Inactive toward 4-hydroxybenzoate and other benzoate derivatives. This Sedimentibacter hydroxybenzoicus (Clostridium hydroxybenzoicum) protein is 3,4-dihydroxybenzoate decarboxylase.